We begin with the raw amino-acid sequence, 413 residues long: GTPase HflX (413 aa).

The Hflx-type G domain maps to 200–386 (VRVALVGYTN…KVYETVREIH (187 aa)). GTP contacts are provided by residues 206–213 (GYTNVGKS), 231–235 (FATLD), 252–255 (DTVG), 318–321 (NKID), and 364–366 (SAT). Mg(2+) is bound by residues Ser213 and Thr233.

The protein belongs to the TRAFAC class OBG-HflX-like GTPase superfamily. HflX GTPase family. Monomer. Associates with the 50S ribosomal subunit. It depends on Mg(2+) as a cofactor.

It is found in the cytoplasm. GTPase that associates with the 50S ribosomal subunit and may have a role during protein synthesis or ribosome biogenesis. This is GTPase HflX from Flavobacterium psychrophilum (strain ATCC 49511 / DSM 21280 / CIP 103535 / JIP02/86).